Here is a 182-residue protein sequence, read N- to C-terminus: Small ribosomal subunit protein uS5 (182 aa).

The S5 DRBM domain occupies 16–79 (FVDRLVHINR…ESAKRGMIYV (64 aa)).

The protein belongs to the universal ribosomal protein uS5 family. As to quaternary structure, part of the 30S ribosomal subunit. Contacts proteins S4 and S8.

Functionally, with S4 and S12 plays an important role in translational accuracy. Its function is as follows. Located at the back of the 30S subunit body where it stabilizes the conformation of the head with respect to the body. This Bartonella henselae (strain ATCC 49882 / DSM 28221 / CCUG 30454 / Houston 1) (Rochalimaea henselae) protein is Small ribosomal subunit protein uS5.